Consider the following 716-residue polypeptide: DNA ligase (716 aa).

Residues 50-54 (DAEYD), 99-100 (SL), and Glu-132 each bind NAD(+). Lys-134 (N6-AMP-lysine intermediate) is an active-site residue. Residues Arg-155, Glu-192, Lys-308, and Lys-332 each contribute to the NAD(+) site. Zn(2+)-binding residues include Cys-437, Cys-439, Cys-461, and Cys-467. The region spanning 638 to 716 (KSNSAVAGKT…EDEWLKLIGE (79 aa)) is the BRCT domain.

This sequence belongs to the NAD-dependent DNA ligase family. LigA subfamily. The cofactor is Mg(2+). Requires Mn(2+) as cofactor.

It catalyses the reaction NAD(+) + (deoxyribonucleotide)n-3'-hydroxyl + 5'-phospho-(deoxyribonucleotide)m = (deoxyribonucleotide)n+m + AMP + beta-nicotinamide D-nucleotide.. In terms of biological role, DNA ligase that catalyzes the formation of phosphodiester linkages between 5'-phosphoryl and 3'-hydroxyl groups in double-stranded DNA using NAD as a coenzyme and as the energy source for the reaction. It is essential for DNA replication and repair of damaged DNA. This is DNA ligase from Bradyrhizobium diazoefficiens (strain JCM 10833 / BCRC 13528 / IAM 13628 / NBRC 14792 / USDA 110).